Consider the following 304-residue polypeptide: Killer cell immunoglobulin-like receptor 2DS4 (304 aa).

A signal peptide spans 1 to 21; sequence MSLMVIIMACVGFFLLQGAWP. Over 22 to 245 the chain is Extracellular; that stretch reads QEGVHRKPSF…SKTGNPRHLH (224 aa). 2 consecutive Ig-like C2-type domains span residues 42–107 and 142–205; these read EETV…VPHS and GENV…FRDA. A disulfide bond links Cys-49 and Cys-100. 5 N-linked (GlcNAc...) asparagine glycosylation sites follow: Asn-67, Asn-84, Asn-144, Asn-178, and Asn-211. Residues Cys-149 and Cys-198 are joined by a disulfide bond. The segment at 220-239 is disordered; sequence VTGNPSNSWPSPTEPSSKTG. Residues 246–265 form a helical membrane-spanning segment; that stretch reads VLIGTSVVKIPFTILLFFLL. Over 266 to 304 the chain is Cytoplasmic; it reads HRWCSDKKNAAVMDQEPAGNRTVNSEDSDEQDHQEVSYA. The interval 280 to 304 is disordered; it reads QEPAGNRTVNSEDSDEQDHQEVSYA.

The protein belongs to the immunoglobulin superfamily. In terms of assembly, interacts with HLA-F; this interaction is direct.

Its subcellular location is the cell membrane. Its function is as follows. Receptor on natural killer (NK) cells for HLA-C alleles. Does not inhibit the activity of NK cells. This is Killer cell immunoglobulin-like receptor 2DS4 from Homo sapiens (Human).